The sequence spans 568 residues: MFS-type efflux transporter phmH (568 aa).

Polar residues predominate over residues 1-11; that stretch reads MVSGTDTTEVG. The segment at 1-39 is disordered; that stretch reads MVSGTDTTEVGATTKAPPSEGTEGILDDHSSNSQPQAEK. 7 helical membrane-spanning segments follow: residues 45–65, 101–121, 134–154, 161–181, 199–219, 237–257, and 268–288; these read YPLS…VSAL, YVMI…GGSS, GIGA…LVPM, IGLL…VGGI, IFYI…LFLH, VIGN…LTYG, and IAAP…WEMS. An N-linked (GlcNAc...) asparagine glycan is attached at N303. The next 6 membrane-spanning stretches (helical) occupy residues 307-327, 344-364, 372-392, 399-419, 437-457, and 515-535; these read AAAF…NFFY, VYTL…GAIV, TVHL…SILD, EWVI…STTL, TWSF…AAIF, and IGIV…EIHL. An N-linked (GlcNAc...) asparagine glycan is attached at N563.

The protein belongs to the major facilitator superfamily.

It localises to the cell membrane. In terms of biological role, MFS-type efflux transporter; part of the gene cluster that mediates the biosynthesis of thethe mycotoxins phomacins, leucine-derived cytochalasans with potent actin polymerization-inhibitory activities and monocot-specific antigerminative activities. PhmH might be involved in the excretion of phomacins. The sequence is that of MFS-type efflux transporter phmH from Phaeosphaeria nodorum (strain SN15 / ATCC MYA-4574 / FGSC 10173) (Glume blotch fungus).